The primary structure comprises 294 residues: Metallophosphoesterase MPPED2 (294 aa).

The Mn(2+) site is built by Asp-65, His-67, Asp-86, Asn-117, and His-213. 117–118 (NH) provides a ligand contact to GMP. GMP-binding positions include 225–226 (KE) and 254–255 (HE). Residue His-254 coordinates Mn(2+).

It belongs to the UPF0046 family. Homodimer. Requires Mn(2+) as cofactor. It depends on Co(2+) as a cofactor. In terms of tissue distribution, expressed in fetal brain (at protein level). detected in fetal and adult brain.

Inhibited by nmolar levels of AMP and GMP. In terms of biological role, displays low metallophosphoesterase activity (in vitro). May play a role in the development of the nervous system. The protein is Metallophosphoesterase MPPED2 (Mpped2) of Rattus norvegicus (Rat).